The primary structure comprises 406 residues: Renin (406 aa).

The first 23 residues, 1-23 (MDGWRRMPRWGLLLLLWGSCTFG), serve as a signal peptide directing secretion. Residues 24–66 (LPTDTTTFKRIFLKRMPSIRESLKERGVDMARLGPEWSQPMKR) constitute a propeptide, activation peptide. The N-linked (GlcNAc...) asparagine glycan is linked to Asn-71. Positions 86-403 (YYGEIGIGTP…DRRNNRIGFA (318 aa)) constitute a Peptidase A1 domain. The active site involves Asp-104. Cys-117 and Cys-124 form a disulfide bridge. Asn-141 carries N-linked (GlcNAc...) asparagine glycosylation. Cysteines 283 and 287 form a disulfide. Asp-292 is an active-site residue. Residues Cys-325 and Cys-362 are joined by a disulfide bond.

This sequence belongs to the peptidase A1 family. Interacts with ATP6AP2.

The protein localises to the secreted. It localises to the membrane. The catalysed reaction is Cleavage of Leu-|-Xaa bond in angiotensinogen to generate angiotensin I.. With respect to regulation, interaction with ATP6AP2 results in a 5-fold increased efficiency in angiotensinogen processing. Functionally, renin is a highly specific endopeptidase, whose only known function is to generate angiotensin I from angiotensinogen in the plasma, initiating a cascade of reactions that produce an elevation of blood pressure and increased sodium retention by the kidney. The chain is Renin (REN) from Macaca fascicularis (Crab-eating macaque).